Reading from the N-terminus, the 171-residue chain is Large ribosomal subunit protein bL9 (171 aa).

The protein belongs to the bacterial ribosomal protein bL9 family.

Functionally, binds to the 23S rRNA. The chain is Large ribosomal subunit protein bL9 from Rickettsia typhi (strain ATCC VR-144 / Wilmington).